Here is a 506-residue protein sequence, read N- to C-terminus: Maturase K (506 aa).

The protein belongs to the intron maturase 2 family. MatK subfamily.

The protein localises to the plastid. It is found in the chloroplast. Functionally, usually encoded in the trnK tRNA gene intron. Probably assists in splicing its own and other chloroplast group II introns. This Trifolium willdenovii (Tomcat clover) protein is Maturase K.